Here is a 359-residue protein sequence, read N- to C-terminus: MLKKLIMFTGLLGGSVLFSGQALAAADFGPCTPEGGTHIFSATINKTVSDTSKNTTGATFVDFDSWNLGGTYAMSCECPDDTSLINDTLFKAVVPLAFVTNIESRSYYQINNNIAIASDVLISGGRGEYVNTPFENVGNLTNNRSQCSQNASSKDAIWTSGGKGHLSLYILHPFVGESIIPSTKIMDLFVTKKPSVYGSIPASSVYISGSITVPQGCELSSGSTLEIPFGEFKATDFKDRKGQVAKNATKFTKELQFKCTNISDGVKIFLRIEGMPNANDSNAIDMGNPDIGAVIEGANGKILVPNDASVNQELSVSGLVDDTHRTASTTISAYPISTTGKLPAAGDFEGIATMRIDVE.

The N-terminal stretch at 1–24 (MLKKLIMFTGLLGGSVLFSGQALA) is a signal peptide.

It belongs to the fimbrial protein family.

The protein resides in the fimbrium. The chain is Protein LpfD (lpfD) from Salmonella typhimurium (strain LT2 / SGSC1412 / ATCC 700720).